The primary structure comprises 575 residues: Adenine deaminase 1 (575 aa).

It belongs to the metallo-dependent hydrolases superfamily. Adenine deaminase family. Mn(2+) is required as a cofactor.

It catalyses the reaction adenine + H2O + H(+) = hypoxanthine + NH4(+). In Agrobacterium fabrum (strain C58 / ATCC 33970) (Agrobacterium tumefaciens (strain C58)), this protein is Adenine deaminase 1.